A 108-amino-acid chain; its full sequence is uncharacterized protein (108 aa).

Residues Met1–Lys10 show a composition bias toward polar residues. Disordered regions lie at residues Met1 to Arg63 and Val83 to Gln108. Residues Tyr33–Pro62 show a composition bias toward basic and acidic residues.

This is an uncharacterized protein from Gallid herpesvirus 2 (strain Chicken/Md5/ATCC VR-987) (GaHV-2).